The sequence spans 506 residues: Glutamate--tRNA ligase (506 aa).

Residues 12-22 (PSPTGDPHVGT) carry the 'HIGH' region motif. The 'KMSKS' region signature appears at 253–257 (KLSKR). Lys256 contacts ATP.

The protein belongs to the class-I aminoacyl-tRNA synthetase family. Glutamate--tRNA ligase type 1 subfamily. As to quaternary structure, monomer.

It is found in the cytoplasm. It catalyses the reaction tRNA(Glu) + L-glutamate + ATP = L-glutamyl-tRNA(Glu) + AMP + diphosphate. Functionally, catalyzes the attachment of glutamate to tRNA(Glu) in a two-step reaction: glutamate is first activated by ATP to form Glu-AMP and then transferred to the acceptor end of tRNA(Glu). This chain is Glutamate--tRNA ligase, found in Chlamydia trachomatis serovar L2 (strain ATCC VR-902B / DSM 19102 / 434/Bu).